The following is a 172-amino-acid chain: Glutamyl-tRNA(Gln) amidotransferase subunit C-4, mitochondrial (172 aa).

The N-terminal 23 residues, 1-23 (MIRIPFHLRQTPGRTLHSLVRSF), are a transit peptide targeting the mitochondrion. A disordered region spans residues 51-73 (PSKVPQRPHKSTIDGQSTPTRIP).

This sequence belongs to the GatC family. Subunit of the heterotrimeric GatCAB amidotransferase (AdT) complex, composed of A, B and C subunits.

The protein resides in the mitochondrion. The catalysed reaction is L-glutamyl-tRNA(Gln) + L-glutamine + ATP + H2O = L-glutaminyl-tRNA(Gln) + L-glutamate + ADP + phosphate + H(+). Its function is as follows. Allows the formation of correctly charged Gln-tRNA(Gln) through the transamidation of misacylated Glu-tRNA(Gln) in the mitochondria. The reaction takes place in the presence of glutamine and ATP through an activated gamma-phospho-Glu-tRNA(Gln). The sequence is that of Glutamyl-tRNA(Gln) amidotransferase subunit C-4, mitochondrial from Culex quinquefasciatus (Southern house mosquito).